We begin with the raw amino-acid sequence, 212 residues long: MAIGLVGKKCGMTRVFTETGASIPVTVVEVDANRITQIKTNDTDGYQAIQITTGERRDSRVTAAQKGHFAKAGVKAGRGVWEFRVTEEELEGREAGSEIAADLFEAGQLVDVTGQSKGKGFQGGVKRHNFSMQDATHGNSVSHRVLGSTGQNQSPGKVFKGKKMPGQMGNKRVTVQGLEVVSVDAEKGLLVIKGAIPGANGGDVIVRPSIKA.

The disordered stretch occupies residues glycine 147 to glycine 166. An N5-methylglutamine modification is found at glutamine 153.

Belongs to the universal ribosomal protein uL3 family. In terms of assembly, part of the 50S ribosomal subunit. Forms a cluster with proteins L14 and L19. Post-translationally, methylated by PrmB.

One of the primary rRNA binding proteins, it binds directly near the 3'-end of the 23S rRNA, where it nucleates assembly of the 50S subunit. In Psychrobacter sp. (strain PRwf-1), this protein is Large ribosomal subunit protein uL3.